Here is an 881-residue protein sequence, read N- to C-terminus: Putative SWI/SNF-related matrix-associated actin-dependent regulator of chromatin subfamily A member 3-like 1 (881 aa).

Residues 272-486 form the Helicase ATP-binding domain; it reads DKRPDPLRGG…YSLMAFLRFE (215 aa). 285–292 contacts ATP; it reads DDMGLGKT. The interval 308–343 is disordered; it reads STSTPTEEPLDGEGDKIEKKGKKRGRGKSSESVTRK. A DEAH box motif is present at residues 437-440; that stretch reads DEAH. The RING-type zinc finger occupies 635-674; it reads CPICISPPTNIIITRCAHIFCRACILQTLQRSKPLCPLCR. The interval 681 to 703 is disordered; it reads DLYNAPPPPPDSSNTDGEDAKSS. One can recognise a Helicase C-terminal domain in the interval 711–876; that stretch reads ALLSLLMASR…EREVNVEDVV (166 aa).

The protein belongs to the SNF2/RAD54 helicase family. RAD16 subfamily.

It localises to the nucleus. In terms of biological role, possesses intrinsic ATP-dependent nucleosome-remodeling activity. This activity may be required for transcriptional activation or repression of specific target promoters. The sequence is that of Putative SWI/SNF-related matrix-associated actin-dependent regulator of chromatin subfamily A member 3-like 1 from Arabidopsis thaliana (Mouse-ear cress).